A 204-amino-acid chain; its full sequence is LexA repressor (204 aa).

Residues 27–47 (VREIGEAVGLASSSTVHGHLA) constitute a DNA-binding region (H-T-H motif). Catalysis depends on for autocatalytic cleavage activity residues Ser-126 and Lys-164.

The protein belongs to the peptidase S24 family. In terms of assembly, homodimer.

It catalyses the reaction Hydrolysis of Ala-|-Gly bond in repressor LexA.. Its function is as follows. Represses a number of genes involved in the response to DNA damage (SOS response), including recA and lexA. In the presence of single-stranded DNA, RecA interacts with LexA causing an autocatalytic cleavage which disrupts the DNA-binding part of LexA, leading to derepression of the SOS regulon and eventually DNA repair. The sequence is that of LexA repressor from Listeria monocytogenes serotype 4b (strain CLIP80459).